We begin with the raw amino-acid sequence, 135 residues long: Large ribosomal subunit protein bL19 (135 aa).

It belongs to the bacterial ribosomal protein bL19 family.

This protein is located at the 30S-50S ribosomal subunit interface and may play a role in the structure and function of the aminoacyl-tRNA binding site. This chain is Large ribosomal subunit protein bL19, found in Xanthomonas axonopodis pv. citri (strain 306).